The chain runs to 272 residues: Undecaprenyl-diphosphatase (272 aa).

Helical transmembrane passes span 4 to 24 (IHSL…EFLP), 45 to 65 (AETF…VMFW), 89 to 109 (LTLG…LVFH), 115 to 135 (LFNP…LIAA), 152 to 174 (TYRQ…FSRS), 189 to 209 (YAAS…ATAL), 225 to 245 (MFAV…KTFL), and 251 to 271 (ISFI…YVVF).

The protein belongs to the UppP family.

Its subcellular location is the cell inner membrane. The catalysed reaction is di-trans,octa-cis-undecaprenyl diphosphate + H2O = di-trans,octa-cis-undecaprenyl phosphate + phosphate + H(+). Functionally, catalyzes the dephosphorylation of undecaprenyl diphosphate (UPP). Confers resistance to bacitracin. In Citrobacter koseri (strain ATCC BAA-895 / CDC 4225-83 / SGSC4696), this protein is Undecaprenyl-diphosphatase.